Reading from the N-terminus, the 96-residue chain is Co-chaperonin GroES (96 aa).

It belongs to the GroES chaperonin family. As to quaternary structure, heptamer of 7 subunits arranged in a ring. Interacts with the chaperonin GroEL.

It is found in the cytoplasm. Together with the chaperonin GroEL, plays an essential role in assisting protein folding. The GroEL-GroES system forms a nano-cage that allows encapsulation of the non-native substrate proteins and provides a physical environment optimized to promote and accelerate protein folding. GroES binds to the apical surface of the GroEL ring, thereby capping the opening of the GroEL channel. This chain is Co-chaperonin GroES, found in Verminephrobacter eiseniae (strain EF01-2).